Consider the following 216-residue polypeptide: NKG2-D type II integral membrane protein (216 aa).

At 1 to 51 the chain is on the cytoplasmic side; the sequence is MGWIRGRRSRHSWEMSEFHNYNLDLAKNDFSTRWQKQRCPVIKSKCRENTS. A helical; Signal-anchor for type II membrane protein transmembrane segment spans residues 52-72; sequence PLFFCCFIAVAMGIRFIVMVT. Residues 73-216 are Extracellular-facing; the sequence is IWSAVFLNSL…NTYICMQRTV (144 aa). 2 disulfides stabilise this stretch: C96-C105 and C99-C110. The 116-residue stretch at 98-213 folds into the C-type lectin domain; sequence PCPKNWICYK…STPNTYICMQ (116 aa). N-linked (GlcNAc...) asparagine glycosylation is found at N115, N131, N163, and N202. 2 disulfides stabilise this stretch: C127-C211 and C189-C203.

As to quaternary structure, homodimer; disulfide-linked. Heterohexamer composed of two subunits of KLRK1 and four subunits of HCST/DAP10. Interacts (via transmembrane domain) with HCST/DAP10 (via transmembrane domain); the interaction is required for KLRK1 NK cell surface and induces NK cell-mediated cytotoxicity. Can form disulfide-bonded heterodimer with CD94. Interacts with CEACAM1; recruits PTPN6 that dephosphorylates VAV1.

Its subcellular location is the cell membrane. Its function is as follows. Functions as an activating and costimulatory receptor involved in immunosurveillance upon binding to various cellular stress-inducible ligands displayed at the surface of autologous tumor cells and virus-infected cells. Provides both stimulatory and costimulatory innate immune responses on activated killer (NK) cells, leading to cytotoxic activity. Acts as a costimulatory receptor for T-cell receptor (TCR) in CD8(+) T-cell-mediated adaptive immune responses by amplifying T-cell activation. Stimulates perforin-mediated elimination of ligand-expressing tumor cells. Signaling involves calcium influx, culminating in the expression of TNF-alpha. Participates in NK cell-mediated bone marrow graft rejection. May play a regulatory role in differentiation and survival of NK cells. Binds to ligands belonging to various subfamilies of MHC class I-related glycoproteins. The protein is NKG2-D type II integral membrane protein (KLRK1) of Pongo pygmaeus (Bornean orangutan).